Reading from the N-terminus, the 354-residue chain is RH-like protein (354 aa).

Transmembrane regions (helical) follow at residues 11–31 (GCLP…FFFF), 45–65 (VATY…LGFL), 77–97 (VAFN…LDGF), 125–145 (ISVG…MVLV), 167–187 (VNIM…AWCL), 209–229 (AMLG…ALLT), 238–258 (VFNT…VSSL), and 287–307 (LISS…ISIG).

The protein belongs to the ammonium transporter (TC 2.A.49) family. Rh subfamily.

It localises to the membrane. Functionally, may be part of an oligomeric complex which is likely to have a transport or channel function in the erythrocyte membrane. This Hylobates pileatus (Pileated gibbon) protein is RH-like protein.